Here is a 274-residue protein sequence, read N- to C-terminus: Serine/threonine-protein kinase 1 (274 aa).

A Protein kinase domain is found at 17 to 265; it reads ARTALHLVNG…YEVIQKNTYW (249 aa). Residues 23-31 and lysine 46 each bind ATP; that span reads LVNGKFGKV. The Proton acceptor role is filled by aspartate 133.

Belongs to the protein kinase superfamily. Ser/Thr protein kinase family.

It catalyses the reaction L-seryl-[protein] + ATP = O-phospho-L-seryl-[protein] + ADP + H(+). The catalysed reaction is L-threonyl-[protein] + ATP = O-phospho-L-threonyl-[protein] + ADP + H(+). In vitro, can phosphorylate histone H1. This chain is Serine/threonine-protein kinase 1 (PK1), found in Lymantria dispar multicapsid nuclear polyhedrosis virus (LdMNPV).